Here is a 71-residue protein sequence, read N- to C-terminus: Arrestin-D (71 aa).

The protein belongs to the arrestin family. As to expression, adrenal, cerebral cortex, heart, liver, lung, pituitary and testis.

The chain is Arrestin-D (Dar) from Rattus norvegicus (Rat).